A 95-amino-acid polypeptide reads, in one-letter code: Protein TusB (95 aa).

This sequence belongs to the DsrH/TusB family. In terms of assembly, heterohexamer, formed by a dimer of trimers. The hexameric TusBCD complex contains 2 copies each of TusB, TusC and TusD. The TusBCD complex interacts with TusE.

It localises to the cytoplasm. Functionally, part of a sulfur-relay system required for 2-thiolation of 5-methylaminomethyl-2-thiouridine (mnm(5)s(2)U) at tRNA wobble positions. The chain is Protein TusB from Escherichia coli (strain SMS-3-5 / SECEC).